Reading from the N-terminus, the 221-residue chain is 7-cyano-7-deazaguanine synthase (221 aa).

8–18 (MSGGMDSTLCA) contacts ATP. Zn(2+) contacts are provided by C187, C195, C198, and C201.

This sequence belongs to the QueC family. Requires Zn(2+) as cofactor.

The enzyme catalyses 7-carboxy-7-deazaguanine + NH4(+) + ATP = 7-cyano-7-deazaguanine + ADP + phosphate + H2O + H(+). It functions in the pathway purine metabolism; 7-cyano-7-deazaguanine biosynthesis. Functionally, catalyzes the ATP-dependent conversion of 7-carboxy-7-deazaguanine (CDG) to 7-cyano-7-deazaguanine (preQ(0)). The chain is 7-cyano-7-deazaguanine synthase from Campylobacter concisus (strain 13826).